Reading from the N-terminus, the 89-residue chain is Small ribosomal subunit protein uS15 (89 aa).

A disordered region spans residues 1–24 (MSLNAETKAGIVEKYRRDPSDTGS). A compositionally biased stretch (basic and acidic residues) spans 11 to 20 (IVEKYRRDPS).

The protein belongs to the universal ribosomal protein uS15 family. In terms of assembly, part of the 30S ribosomal subunit. Forms a bridge to the 50S subunit in the 70S ribosome, contacting the 23S rRNA.

Functionally, one of the primary rRNA binding proteins, it binds directly to 16S rRNA where it helps nucleate assembly of the platform of the 30S subunit by binding and bridging several RNA helices of the 16S rRNA. Forms an intersubunit bridge (bridge B4) with the 23S rRNA of the 50S subunit in the ribosome. This is Small ribosomal subunit protein uS15 from Thioalkalivibrio sulfidiphilus (strain HL-EbGR7).